The following is a 441-amino-acid chain: tRNA modification GTPase MnmE (441 aa).

Positions 21, 79, and 118 each coordinate (6S)-5-formyl-5,6,7,8-tetrahydrofolate. The TrmE-type G domain maps to 214-370 (GFKIAIVGKP…LEGYLKTQDT (157 aa)). Residues 224 to 229 (NVGKSS), 243 to 249 (SDEAGTT), and 268 to 271 (DTAG) each bind GTP. Residues S228 and T249 each contribute to the Mg(2+) site. K441 contacts (6S)-5-formyl-5,6,7,8-tetrahydrofolate.

It belongs to the TRAFAC class TrmE-Era-EngA-EngB-Septin-like GTPase superfamily. TrmE GTPase family. Homodimer. Heterotetramer of two MnmE and two MnmG subunits. K(+) is required as a cofactor.

Its subcellular location is the cytoplasm. In terms of biological role, exhibits a very high intrinsic GTPase hydrolysis rate. Involved in the addition of a carboxymethylaminomethyl (cmnm) group at the wobble position (U34) of certain tRNAs, forming tRNA-cmnm(5)s(2)U34. This chain is tRNA modification GTPase MnmE, found in Campylobacter concisus (strain 13826).